Consider the following 235-residue polypeptide: FsC-acetyl coenzyme A-N(2)-transacetylase (235 aa).

An N-acetyltransferase domain is found at 14-190 (LELVPLGHEH…RYSITREEWL (177 aa)). CoA-binding positions include 106-108 (FRV), Gly114, Asn146, and 151-153 (AVM).

It participates in siderophore biosynthesis. Functionally, fsC-acetyl coenzyme A-N(2)-transacetylase; part of the siderophore biosynthetic pathway. Aspergillus fumigatus produces 4 types of siderophores, low-molecular-mass iron chelators, including excreted fusarinine C (FsC) and triacetylfusarinine C (TAFC) for iron uptake and intacellular ferricrocin (FC) for hyphal and hydroxyferricrocin (HFC) for conidial iron distribution and storage. TAFC consists of 3 N(2)-acetyl-N(5)-anhydromevalonyl-N(5)-hydroxyornithine residues cyclically linked by ester bonds; FC is a cyclic hexapeptide with the structure Gly-Ser-Gly-(N(5)-acetyl-N(5)-hydroxyornithine)x3. The biosynthesis of all four siderophores depends on the hydroxylation of ornithine, catalyzed by the monooxygenase sidA. Subsequently, the pathways for biosynthesis of extra- and intracellular siderophores split. For biosynthesis of extracellular siderophores, the transacylase sidF transfers anhydromevalonyl to N(5)-hydroxyornithine. The required anhydromevalonyl-CoA moiety is derived from mevalonate by CoA ligation and dehydration catalyzed by sidI and sidH respectively. The acetylation of N(5)-hydroxyornithine for FC biosynthesis involves the constitutively expressed sidL. FC is hydroxylated to HFC by an as yet uncharacterized enzyme during conidiation. Assembly of fusarinine C (FsC) and FC is catalyzed by two different nonribosomal peptide synthetases (NRPS), sidD and sidC respectively. Subsequently, sidG catalyzes N2-acetylation of FsC for forming TAFC. Both extra- and intracellular siderophores are crucial for growth during iron limitation and virulence. The polypeptide is FsC-acetyl coenzyme A-N(2)-transacetylase (Aspergillus fumigatus (strain ATCC MYA-4609 / CBS 101355 / FGSC A1100 / Af293) (Neosartorya fumigata)).